The sequence spans 242 residues: uncharacterized protein (242 aa).

The protein belongs to the MtxX family.

This is an uncharacterized protein from Methanothermobacter thermautotrophicus (strain ATCC 29096 / DSM 1053 / JCM 10044 / NBRC 100330 / Delta H) (Methanobacterium thermoautotrophicum).